Consider the following 154-residue polypeptide: uncharacterized protein (154 aa).

The N-terminal 42 residues, 1 to 42 (MLRVIWKHSSRVTRSIELSNISTTNHTRSLRRLSWISPRRFY), are a transit peptide targeting the mitochondrion.

It is found in the mitochondrion. This is an uncharacterized protein from Saccharomyces cerevisiae (strain ATCC 204508 / S288c) (Baker's yeast).